A 661-amino-acid chain; its full sequence is COBRA-like protein 7 (661 aa).

The signal sequence occupies residues 1 to 26 (MDSAPNFIPRLLLLSLLIVSIPLTSS). Positions 26–45 (SQSDANTTNPSPSPPSDSDL) are disordered. Asn-31, Asn-64, Asn-122, Asn-170, Asn-314, Asn-327, Asn-356, Asn-369, Asn-398, Asn-410, Asn-430, Asn-472, Asn-551, and Asn-561 each carry an N-linked (GlcNAc...) asparagine glycan. Ser-637 carries GPI-anchor amidated serine lipidation. The propeptide at 638 to 661 (SQHRKHISVFLLALPVLALLILRA) is removed in mature form.

Belongs to the COBRA family. In terms of tissue distribution, expressed in roots, stems, leaves, flowers and siliques.

It localises to the cell membrane. In Arabidopsis thaliana (Mouse-ear cress), this protein is COBRA-like protein 7 (COBL7).